Here is a 271-residue protein sequence, read N- to C-terminus: Glutamate racemase (271 aa).

Residues 10–11 (DS) and 42–43 (YG) each bind substrate. Cys73 (proton donor/acceptor) is an active-site residue. 74-75 (NS) serves as a coordination point for substrate. The active-site Proton donor/acceptor is Cys183. 184–185 (TH) is a binding site for substrate.

Belongs to the aspartate/glutamate racemases family.

It catalyses the reaction L-glutamate = D-glutamate. It functions in the pathway cell wall biogenesis; peptidoglycan biosynthesis. Its function is as follows. Provides the (R)-glutamate required for cell wall biosynthesis. The polypeptide is Glutamate racemase (Saccharopolyspora erythraea (strain ATCC 11635 / DSM 40517 / JCM 4748 / NBRC 13426 / NCIMB 8594 / NRRL 2338)).